A 193-amino-acid chain; its full sequence is BH3-interacting domain death agonist (193 aa).

The BH3 signature appears at 87 to 101; sequence IAAQLAEIGDQLDKQ.

As to quaternary structure, forms heterodimers either with the pro-apoptotic protein BAX or the anti-apoptotic protein Bcl-2.

It localises to the cytoplasm. It is found in the mitochondrion outer membrane. In terms of biological role, induces caspases and apoptosis. Counters the protective effect of Bcl-2. The chain is BH3-interacting domain death agonist (BID) from Gallus gallus (Chicken).